The primary structure comprises 394 residues: Putative 8-amino-7-oxononanoate synthase (394 aa).

R30 is a binding site for substrate. G117–Y118 serves as a coordination point for pyridoxal 5'-phosphate. H142 provides a ligand contact to substrate. Pyridoxal 5'-phosphate contacts are provided by residues S190, D215 to H218, and T246 to K249. The residue at position 249 (K249) is an N6-(pyridoxal phosphate)lysine. Substrate is bound at residue T364.

It belongs to the class-II pyridoxal-phosphate-dependent aminotransferase family. BioF subfamily. In terms of assembly, homodimer. Pyridoxal 5'-phosphate serves as cofactor.

The enzyme catalyses 6-carboxyhexanoyl-[ACP] + L-alanine + H(+) = (8S)-8-amino-7-oxononanoate + holo-[ACP] + CO2. It participates in cofactor biosynthesis; biotin biosynthesis. In terms of biological role, catalyzes the decarboxylative condensation of pimeloyl-[acyl-carrier protein] and L-alanine to produce 8-amino-7-oxononanoate (AON), [acyl-carrier protein], and carbon dioxide. The polypeptide is Putative 8-amino-7-oxononanoate synthase (bioF) (Nostoc punctiforme (strain ATCC 29133 / PCC 73102)).